The sequence spans 447 residues: Rab GDP dissociation inhibitor alpha (447 aa).

The residue at position 427 (Ser-427) is a Phosphoserine.

This sequence belongs to the Rab GDI family. As to quaternary structure, interacts with RHOH. Interacts with the non-phosphorylated forms of RAB1A, RAB3A, RAB5A, RAB5B, RAB5C, RAB8A, RAB8B, RAB10, RAB12, RAB35, and RAB43. Interacts with RAB3A.

It is found in the cytoplasm. It localises to the golgi apparatus. The protein localises to the trans-Golgi network. Functionally, regulates the GDP/GTP exchange reaction of most Rab proteins by inhibiting the dissociation of GDP from them, and the subsequent binding of GTP to them. Promotes the dissociation of GDP-bound Rab proteins from the membrane and inhibits their activation. Promotes the dissociation of RAB1A, RAB3A, RAB5A and RAB10 from membranes. In Bos taurus (Bovine), this protein is Rab GDP dissociation inhibitor alpha (GDI1).